The following is a 476-amino-acid chain: Variant surface glycoprotein MITAT 1.2 (476 aa).

A signal peptide spans 1–26 (MPSNQEARLFLAVLVLAQVLPILVDS). Disulfide bonds link Cys41–Cys171 and Cys149–Cys213. The N-linked (GlcNAc...) asparagine glycan is linked to Asn289. 2 disordered regions span residues 389-418 (QKHK…CKSP) and 435-459 (EEAK…TGSS). 2 cysteine pairs are disulfide-bonded: Cys407–Cys419 and Cys415–Cys430. Positions 435-449 (EEAKKVADETAKDGK) are enriched in basic and acidic residues. The span at 450-459 (TGNTNTTGSS) shows a compositional bias: low complexity. N-linked (GlcNAc...) asparagine glycosylation is present at Asn454. Residue Ser459 is the site of GPI-anchor amidated serine attachment. The propeptide at 460–476 (NSFVISKTPLWLAVLLF) is removed in mature form.

In terms of assembly, homodimer.

The protein resides in the cell membrane. VSG forms a coat on the surface of the parasite. The trypanosome evades the immune response of the host by expressing a series of antigenically distinct VSGs from an estimated 1000 VSG genes. The protein is Variant surface glycoprotein MITAT 1.2 of Trypanosoma brucei brucei.